Reading from the N-terminus, the 353-residue chain is Mas-related G-protein coupled receptor member B5 (353 aa).

Residues methionine 1–asparagine 67 lie on the Extracellular side of the membrane. 2 N-linked (GlcNAc...) asparagine glycosylation sites follow: asparagine 26 and asparagine 44. A helical membrane pass occupies residues phenylalanine 68–phenylalanine 90. The Cytoplasmic portion of the chain corresponds to histidine 91–alanine 96. A helical membrane pass occupies residues phenylalanine 97–valine 117. The Extracellular segment spans residues tyrosine 118–phenylalanine 131. A helical membrane pass occupies residues tyrosine 132 to isoleucine 152. The Cytoplasmic portion of the chain corresponds to serine 153 to alanine 180. Residues leucine 181 to phenylalanine 201 traverse the membrane as a helical segment. Topologically, residues glycine 202–serine 213 are extracellular. Residues phenylalanine 214–methionine 234 traverse the membrane as a helical segment. Over leucine 235 to threonine 253 the chain is Cytoplasmic. A helical membrane pass occupies residues isoleucine 254–leucine 274. Topologically, residues leucine 275–lysine 289 are extracellular. Residues isoleucine 290–glycine 310 form a helical membrane-spanning segment. Topologically, residues serine 311–valine 353 are cytoplasmic. Residues threonine 333 to valine 353 form a disordered region.

Belongs to the G-protein coupled receptor 1 family. Mas subfamily. In terms of tissue distribution, expressed strongly in newborn dorsal root ganglia, adult dorsal root ganglia and trigeminal ganlia.

The protein localises to the membrane. Orphan receptor. Probably involved in the function of nociceptive neurons. May regulate nociceptor function and/or development, including the sensation or modulation of pain. This Rattus norvegicus (Rat) protein is Mas-related G-protein coupled receptor member B5 (Mrgprb5).